We begin with the raw amino-acid sequence, 447 residues long: Protein mab-21-like 4 (447 aa).

This chain is Protein mab-21-like 4, found in Homo sapiens (Human).